Here is a 229-residue protein sequence, read N- to C-terminus: Vacuolar protein-sorting-associated protein 60 (229 aa).

The stretch at 9–155 forms a coiled coil; that stretch reads NKKSHDQLLQ…QGDELQEVLA (147 aa). The residue at position 12 (Ser12) is a Phosphoserine. The interval 128 to 159 is interaction with VTA1; it reads INIDKLQDMQDEMLDLIEQGDELQEVLAMNNN. The interval 186 to 229 is disordered; the sequence is PTSENSLGNDMPSYLLGANAPPAFIDEEPNLDTEDKNKALESAQ. A compositionally biased stretch (basic and acidic residues) spans 218–229; it reads TEDKNKALESAQ.

The protein belongs to the SNF7 family. Interacts with VTA1; the interaction occurs at he endosomal membrane.

Its subcellular location is the endosome membrane. It is found in the vacuole membrane. Has a role in a late stage of multivesicular body (MVB) formation. Can stimulate VPS4 ATPase activity via VTA1. The polypeptide is Vacuolar protein-sorting-associated protein 60 (VPS60) (Saccharomyces cerevisiae (strain ATCC 204508 / S288c) (Baker's yeast)).